Reading from the N-terminus, the 485-residue chain is Trigger factor (485 aa).

In terms of domain architecture, PPIase FKBP-type spans 169–261 (GDVAIVDFVG…LKELKEKELP (93 aa)).

It belongs to the FKBP-type PPIase family. Tig subfamily.

It is found in the cytoplasm. It catalyses the reaction [protein]-peptidylproline (omega=180) = [protein]-peptidylproline (omega=0). Functionally, involved in protein export. Acts as a chaperone by maintaining the newly synthesized protein in an open conformation. Functions as a peptidyl-prolyl cis-trans isomerase. The sequence is that of Trigger factor from Trichodesmium erythraeum (strain IMS101).